The sequence spans 217 residues: Probable transaldolase (217 aa).

The Schiff-base intermediate with substrate role is filled by Lys83.

This sequence belongs to the transaldolase family. Type 3B subfamily.

It localises to the cytoplasm. The catalysed reaction is D-sedoheptulose 7-phosphate + D-glyceraldehyde 3-phosphate = D-erythrose 4-phosphate + beta-D-fructose 6-phosphate. It participates in carbohydrate degradation; pentose phosphate pathway; D-glyceraldehyde 3-phosphate and beta-D-fructose 6-phosphate from D-ribose 5-phosphate and D-xylulose 5-phosphate (non-oxidative stage): step 2/3. Functionally, transaldolase is important for the balance of metabolites in the pentose-phosphate pathway. This is Probable transaldolase from Fervidobacterium nodosum (strain ATCC 35602 / DSM 5306 / Rt17-B1).